Reading from the N-terminus, the 408-residue chain is Tryptophan synthase beta chain (408 aa).

The residue at position 90 (Lys90) is an N6-(pyridoxal phosphate)lysine.

Belongs to the TrpB family. As to quaternary structure, tetramer of two alpha and two beta chains. Pyridoxal 5'-phosphate is required as a cofactor.

The enzyme catalyses (1S,2R)-1-C-(indol-3-yl)glycerol 3-phosphate + L-serine = D-glyceraldehyde 3-phosphate + L-tryptophan + H2O. It functions in the pathway amino-acid biosynthesis; L-tryptophan biosynthesis; L-tryptophan from chorismate: step 5/5. Functionally, the beta subunit is responsible for the synthesis of L-tryptophan from indole and L-serine. The polypeptide is Tryptophan synthase beta chain (Bacillus licheniformis (strain ATCC 14580 / DSM 13 / JCM 2505 / CCUG 7422 / NBRC 12200 / NCIMB 9375 / NCTC 10341 / NRRL NRS-1264 / Gibson 46)).